A 689-amino-acid chain; its full sequence is DNA ligase (689 aa).

Residues 51-55, 100-101, and E129 contribute to the NAD(+) site; these read DSEYD and SL. K131 (N6-AMP-lysine intermediate) is an active-site residue. NAD(+)-binding residues include R152, E189, K308, and K332. The Zn(2+) site is built by C426, C429, C444, and C450. The region spanning 609-689 is the BRCT domain; sequence ADEQPLKGQT…ELLALLAANS (81 aa).

It belongs to the NAD-dependent DNA ligase family. LigA subfamily. Mg(2+) is required as a cofactor. The cofactor is Mn(2+).

The catalysed reaction is NAD(+) + (deoxyribonucleotide)n-3'-hydroxyl + 5'-phospho-(deoxyribonucleotide)m = (deoxyribonucleotide)n+m + AMP + beta-nicotinamide D-nucleotide.. Functionally, DNA ligase that catalyzes the formation of phosphodiester linkages between 5'-phosphoryl and 3'-hydroxyl groups in double-stranded DNA using NAD as a coenzyme and as the energy source for the reaction. It is essential for DNA replication and repair of damaged DNA. This chain is DNA ligase, found in Shewanella sp. (strain ANA-3).